The sequence spans 713 residues: Probable 1-deoxy-D-xylulose-5-phosphate synthase 2, chloroplastic (713 aa).

The N-terminal 30 residues, 1-30, are a transit peptide targeting the chloroplast; sequence MALQASSSPSMFRAIPTNTNASCRRKLQVR. Residues His-140 and 181–183 each bind thiamine diphosphate; that span reads GHS. Mg(2+) is bound at residue Asp-212. Thiamine diphosphate contacts are provided by residues 213–214, Asn-241, Tyr-362, and Glu-444; that span reads GA. Asn-241 provides a ligand contact to Mg(2+).

This sequence belongs to the transketolase family. DXPS subfamily. Homodimer. It depends on Mg(2+) as a cofactor. The cofactor is thiamine diphosphate.

It is found in the plastid. It localises to the chloroplast. The catalysed reaction is D-glyceraldehyde 3-phosphate + pyruvate + H(+) = 1-deoxy-D-xylulose 5-phosphate + CO2. It participates in metabolic intermediate biosynthesis; 1-deoxy-D-xylulose 5-phosphate biosynthesis; 1-deoxy-D-xylulose 5-phosphate from D-glyceraldehyde 3-phosphate and pyruvate: step 1/1. Its function is as follows. Catalyzes the acyloin condensation reaction between C atoms 2 and 3 of pyruvate and glyceraldehyde 3-phosphate to yield 1-deoxy-D-xylulose-5-phosphate (DXP). Is a limiting enzyme for plastidic isoprenoid biosynthesis and essential for chloroplast development. The chain is Probable 1-deoxy-D-xylulose-5-phosphate synthase 2, chloroplastic from Oryza sativa subsp. japonica (Rice).